The chain runs to 176 residues: uncharacterized protein (176 aa).

The N-terminal stretch at 1–22 is a signal peptide; the sequence is MKYNNIIFLGLCLGLTTYSALS. Cysteine 38 and cysteine 78 are joined by a disulfide.

It belongs to the fimbrial protein family.

The protein resides in the fimbrium. This is an uncharacterized protein from Escherichia coli (strain K12).